A 261-amino-acid chain; its full sequence is Neurexophilin-2 (261 aa).

Positions 1–22 (MSLRPLPLLVVPGLLQLLFCDS) are cleaved as a signal peptide. The segment at 23-87 (EEVIHNTESV…WDWLANITEI (65 aa)) is II. 4 N-linked (GlcNAc...) asparagine glycosylation sites follow: N83, N136, N146, and N152. An III region spans residues 88-166 (QEQLARTKRR…LVPPSKVVEF (79 aa)). An IV (linker domain) region spans residues 167–175 (EISPQSTLE). The v (Cys-rich) stretch occupies residues 176 to 261 (TKESKSFNCH…HSETPYLSFG (86 aa)).

The protein belongs to the neurexophilin family. May be proteolytically processed at the boundary between the N-terminal non-conserved and the central conserved domain in neuron-like cells.

The protein localises to the secreted. May be signaling molecules that resemble neuropeptides and that act by binding to alpha-neurexins and possibly other receptors. The protein is Neurexophilin-2 (Nxph2) of Mus musculus (Mouse).